A 285-amino-acid chain; its full sequence is Proteasome subunit beta (285 aa).

A propeptide spans 1–50 (MTAEHPARLPQAFMTPGSSSFVDFLAAHDPSLLPSSRALPAGSAPPAPHG) (removed in mature form; by autocatalysis). The Nucleophile role is filled by Thr51. Residues 266–285 (RTRQARSSRSRHGSLGGDLR) form a disordered region.

Belongs to the peptidase T1B family. As to quaternary structure, the 20S proteasome core is composed of 14 alpha and 14 beta subunits that assemble into four stacked heptameric rings, resulting in a barrel-shaped structure. The two inner rings, each composed of seven catalytic beta subunits, are sandwiched by two outer rings, each composed of seven alpha subunits. The catalytic chamber with the active sites is on the inside of the barrel. Has a gated structure, the ends of the cylinder being occluded by the N-termini of the alpha-subunits. Is capped by the proteasome-associated ATPase, ARC.

It localises to the cytoplasm. The catalysed reaction is Cleavage of peptide bonds with very broad specificity.. It participates in protein degradation; proteasomal Pup-dependent pathway. Its activity is regulated as follows. The formation of the proteasomal ATPase ARC-20S proteasome complex, likely via the docking of the C-termini of ARC into the intersubunit pockets in the alpha-rings, may trigger opening of the gate for substrate entry. Interconversion between the open-gate and close-gate conformations leads to a dynamic regulation of the 20S proteasome proteolysis activity. Its function is as follows. Component of the proteasome core, a large protease complex with broad specificity involved in protein degradation. The sequence is that of Proteasome subunit beta from Sanguibacter keddieii (strain ATCC 51767 / DSM 10542 / NCFB 3025 / ST-74).